A 54-amino-acid chain; its full sequence is Large ribosomal subunit protein bL33A (54 aa).

Belongs to the bacterial ribosomal protein bL33 family.

This Mycolicibacterium gilvum (strain PYR-GCK) (Mycobacterium gilvum (strain PYR-GCK)) protein is Large ribosomal subunit protein bL33A.